Here is a 203-residue protein sequence, read N- to C-terminus: NAD(P)H dehydrogenase (quinone) (203 aa).

Residues 7–194 enclose the Flavodoxin-like domain; it reads VLVLYHSSYG…SLARKQGAHV (188 aa). FMN is bound by residues 13–18 and 82–84; these read SSYGHI and TRF. Position 15 (tyrosine 15) interacts with NAD(+). Tryptophan 102 is a binding site for substrate. FMN is bound by residues 117–122 and histidine 137; that span reads STGTGG.

The protein belongs to the WrbA family. The cofactor is FMN.

The enzyme catalyses a quinone + NADH + H(+) = a quinol + NAD(+). It carries out the reaction a quinone + NADPH + H(+) = a quinol + NADP(+). This Parvibaculum lavamentivorans (strain DS-1 / DSM 13023 / NCIMB 13966) protein is NAD(P)H dehydrogenase (quinone).